The chain runs to 578 residues: Septation ring formation regulator EzrA (578 aa).

Residues 1–8 (MKNNWIII) lie on the Extracellular side of the membrane. A helical membrane pass occupies residues 9–27 (LVLVIVIIAAVLYLIGYFM). Over 28 to 578 (RKKNQEQLDE…NINNPNLTAI (551 aa)) the chain is Cytoplasmic. 3 coiled-coil regions span residues 103 to 165 (RFMK…DDKA), 256 to 285 (QNFA…AAVE), and 394 to 490 (KILD…DDLE).

This sequence belongs to the EzrA family.

It is found in the cell membrane. Functionally, negative regulator of FtsZ ring formation; modulates the frequency and position of FtsZ ring formation. Inhibits FtsZ ring formation at polar sites. Interacts either with FtsZ or with one of its binding partners to promote depolymerization. The polypeptide is Septation ring formation regulator EzrA (Enterococcus faecalis (strain ATCC 700802 / V583)).